The following is a 246-amino-acid chain: 4'-phosphopantetheinyl transferase Svp (246 aa).

Residues 223–232 (AGTAEESAEG) are compositionally biased toward low complexity. A disordered region spans residues 223–246 (AGTAEESAEGAGKEATADDRTAVP). Over residues 233-246 (AGKEATADDRTAVP) the composition is skewed to basic and acidic residues.

Belongs to the P-Pant transferase superfamily. Gsp/Sfp/HetI/AcpT family.

It carries out the reaction apo-[ACP] + CoA = holo-[ACP] + adenosine 3',5'-bisphosphate + H(+). Functionally, transfers the 4'-phosphopantetheine moiety from coenzyme A to a Ser of an acyl-carrier-protein. The enzyme is able to transfer the cofactor to a broad range of enzymes with acyl- or peptidyl-carrier protein domains. In Streptomyces mobaraensis (Streptoverticillium mobaraense), this protein is 4'-phosphopantetheinyl transferase Svp (svp).